Consider the following 280-residue polypeptide: uncharacterized protein (280 aa).

3 helical membrane-spanning segments follow: residues 10 to 29, 164 to 186, and 209 to 228; these read IQQN…LLFN, FVFV…FAFI, and IFGL…YFLL.

It is found in the cell membrane. This is an uncharacterized protein from Bacillus subtilis (strain 168).